The primary structure comprises 60 residues: MAKKLEITLTRSVIGRPQDQRATVEALGLKKLNSTVVKEETPAILGMINKVSHLITVKEA.

It belongs to the universal ribosomal protein uL30 family. As to quaternary structure, part of the 50S ribosomal subunit.

The polypeptide is Large ribosomal subunit protein uL30 (Bacillus mycoides (strain KBAB4) (Bacillus weihenstephanensis)).